The sequence spans 1516 residues: MMRSVAWAALSWRVFWLSLLWTAVSAKQDKPKIDSVMLEHPPLNLNYFEDSDVIVFQDIEERNIYRSEDAGFTWNKVKELPDGGSAFLYLHPFESSTAFVLTKDRKHYKTEDRGKSWTEFDSGSMPSAFQPDTLIFHAGDPKRIIFNGMNCDGIFCDEETTYTLDGFKTIQPLRPSTSGCWWAKSNTEFTTGDEDLDKTRILCIVTDPLSIFKTSQKLCVSDTFFKKENNGKYQEFEPTLDSNRDVTGVVSLAAVKSFILVASSSANSDEMALYVTSNANQWHRAMFPSDDSHDHSHQINQEAYTVLESTNYSIQIDVMTSHPSRPMGVIFTSNSNGTYFTENIPYTNRNIKGHVDFEKISGIQGIFLVNTVENGKDVDEGSAEKVVVTQITFDDGRTFEPVKAGDQRIHLHSMTQINNIGRIFSSPAPGLVMGNGNTGKSLGKFDDSNLYVSDDAGVTWKQALEGPHKYEFGDSGTILVAVRDSAKEDVDKVSYSLNYGDTWESVPLPKDLKIRPALLTTTQDSTSLKFLLIGEHDKRYHMVALDFEALEKSTCGDKDMESWNARVDDKGQATCIMGRKQTYKRRTKKADCFIKSNFKDPEPINEPCDCTDADFECDYNFQRDPEDRTVCKRVGSIPMPQGACKDKDDKFKGSSGWRMIPGNQCKRTKGAQKDDEVERKCSEGGGGNSGGDGSSPSVPANGEISHKKNDFDSEALDMQKYYLIRGDSSSGTDETIIARPIGERTGNSVQVENKVWLTSDHGKSWKRILDQEDIMKIFHHDYFKDVMFFSTKTDKILYTIDRGQTFHSFKTPVASDDFTLSFHPDKKDWLIWVGKHCDDVSGSKSCFPAASISTDRGDHWKTLVRYATKCEFTGNSAYKYRPLTQIVCLVHQEENLESPKTIVTINDFLADDKLIHNGTVASFATMNEFILATDEVTEAGKEKAGLQAIASLDGQHFEAAQFPYNFHDSHSSLYTVLDSSNHAVNLFVATDLSDGRRRGSIIKSNSNGTTYVLSASNVNSDEAGYVDFEKVAGLEGVTLINVVANPDKKDGKKEIQTKISHNDGAEWDFLPPPSKDVDGKAYKCSSAGDSKCALHLHHYTERDNKRRTFSASKAIGLIFGVGNVGSTLGEMKDADTFMSADGGINWKNVKKGAWTWQYGDQGSIIVLAERATHGNGAKTKTVSYSLDEGETWNEYEFTDKEVTILDLTSVKTGAARNFLVWCRSDSKQLFSVNIDFTGLTDKACEYKDDASASDYELWSPKHPLQKNDCFFGHVAKYLRKKKDRKCFNKATLSLLHGYENCECTRRDFECAYNYELDNHGQCSLVPGFQPLSGEEWCKQNPNETTWFEPTGYRRLPLTTCKDGVELDKTSDEHACEGYEDEFKRKHRTSGWVIFFAVVIPIGLAAAIGWYVWRNWSGKFGQIRLGDNSSTFDSDQPWIKYPVIAISAVAAVAAAMPLVIISLWRSATGVYERVSNRSRGGNWSRRYTTRDSFARSDYSMVDDDEGELLGEESDEEV.

The signal sequence occupies residues 1–26; that stretch reads MMRSVAWAALSWRVFWLSLLWTAVSA. Residues 27 to 1390 are Lumenal-facing; sequence KQDKPKIDSV…EFKRKHRTSG (1364 aa). The BNR 1 repeat unit spans residues 108–118; the sequence is YKTEDRGKSWT. N-linked (GlcNAc...) asparagine glycosylation is found at Asn311 and Asn336. BNR repeat units lie at residues 390 to 400, 451 to 461, and 495 to 504; these read QITFDDGRTFE, YVSDDAGVTWK, and YSLNYGDTWE. The disordered stretch occupies residues 642–709; sequence GACKDKDDKF…ANGEISHKKN (68 aa). Over residues 671–682 the composition is skewed to basic and acidic residues; sequence AQKDDEVERKCS. The span at 683–693 shows a compositional bias: gly residues; that stretch reads EGGGGNSGGDG. BNR repeat units follow at residues 756-766, 798-807, and 852-861; these read WLTSDHGKSWK, YTIDRGQTFH, and ISTDRGDHWK. N-linked (GlcNAc...) asparagine glycans are attached at residues Asn917 and Asn1007. BNR repeat units lie at residues 1137-1147 and 1184-1193; these read FMSADGGINWK and YSLDEGETWN. Asn1342 carries N-linked (GlcNAc...) asparagine glycosylation. Residues 1391–1411 traverse the membrane as a helical segment; that stretch reads WVIFFAVVIPIGLAAAIGWYV. The Cytoplasmic portion of the chain corresponds to 1412 to 1441; sequence WRNWSGKFGQIRLGDNSSTFDSDQPWIKYP. A helical transmembrane segment spans residues 1442-1462; the sequence is VIAISAVAAVAAAMPLVIISL. Residues 1463-1516 are Lumenal-facing; it reads WRSATGVYERVSNRSRGGNWSRRYTTRDSFARSDYSMVDDDEGELLGEESDEEV.

It belongs to the VPS10-related sortilin family.

The protein localises to the golgi apparatus. It localises to the trans-Golgi network membrane. It is found in the prevacuolar compartment membrane. Functions as a sorting receptor in the Golgi compartment required for the intracellular sorting and delivery of soluble vacuolar proteins, like carboxypeptidase Y (CPY) and proteinase A. Executes multiple rounds of sorting by cycling between the late Golgi and a prevacuolar endosome-like compartment. The sequence is that of Vacuolar protein sorting/targeting protein 10 (VPS10) from Fusarium vanettenii (strain ATCC MYA-4622 / CBS 123669 / FGSC 9596 / NRRL 45880 / 77-13-4) (Fusarium solani subsp. pisi).